The following is a 582-amino-acid chain: uncharacterized protein (582 aa).

A run of 6 helical transmembrane segments spans residues Val17 to Val37, Leu57 to Tyr77, Met131 to Ile151, Ala156 to Ile176, Ala239 to Phe259, and Val271 to Ala291. Residues Val17–Arg300 form the ABC transmembrane type-1 domain. The ABC transporter domain occupies Val335 to Ser571. Residue Gly369–Ser376 coordinates ATP.

This sequence belongs to the ABC transporter superfamily.

Its subcellular location is the cell membrane. This is an uncharacterized protein from Mycobacterium tuberculosis (strain CDC 1551 / Oshkosh).